Consider the following 94-residue polypeptide: Integration host factor subunit beta (94 aa).

The protein belongs to the bacterial histone-like protein family. Heterodimer of an alpha and a beta chain.

Functionally, this protein is one of the two subunits of integration host factor, a specific DNA-binding protein that functions in genetic recombination as well as in transcriptional and translational control. This Caulobacter sp. (strain K31) protein is Integration host factor subunit beta.